Consider the following 541-residue polypeptide: MTGEKIRSLRRDHKPSKEEGDLLEPGDEEAAAALGGTFTRSRIGKGGKACHKIFSNHHHRLQLKAAPASSNPPGAPALPLHNSSVTANSQSPALLAGTNPVAVVADGGSCPAHYPVHECVFKGDVRRLSSLIRTHNIGQKDNHGNTPLHLAVMLGNKECAHLLLAHNAPVKVKNAQGWSPLAEAISYGDRQMITALLRKLKQQSRESVEEKRPRLLKALKELGDFYLELHWDFQSWVPLLSRILPSDACKIYKQGINIRLDTTLIDFTDMKCQRGDLSFIFNGDAAPSESFVVLDNEQKVYQRIHHEESEMETEEEVDILMSSDIYSATLSTKSISFTRAQTGWLFREDKTERVGNFLADFYLVNGLVLESRKRREHLSEEDILRNKAIMESLSKGGNIMEQNFEPIRRQSLTPPPQNTITWEEYISAENGKAPHLGRELVCKESKKTFKATIAMSQEFPLGIELLLNVLEVVAPFKHFNKLREFVQMKLPPGFPVKLDIPVFPTITATVTFQEFRYDEFDGSIFTIPDDYKEDPSRFPDL.

Residues 1-20 (MTGEKIRSLRRDHKPSKEEG) are compositionally biased toward basic and acidic residues. Positions 1–27 (MTGEKIRSLRRDHKPSKEEGDLLEPGD) are disordered. 3 ANK repeats span residues 111–142 (PAHYPVHECVFKGDVRRLSSLIRTHNIGQKDN), 143–172 (HGNTPLHLAVMLGNKECAHLLLAHNAPVKV), and 176–205 (QGWSPLAEAISYGDRQMITALLRKLKQQSR). Residue Ser411 is modified to Phosphoserine.

It localises to the endoplasmic reticulum membrane. Functionally, acts as a molecular chaperone for G protein-coupled receptors, regulating their biogenesis and exit from the ER. In Homo sapiens (Human), this protein is Ankyrin repeat domain-containing protein 13C (ANKRD13C).